The chain runs to 519 residues: Cytochrome P450 monooxygenase AtmP (519 aa).

A helical membrane pass occupies residues Ser21–Val41. Residue Cys457 participates in heme binding.

The protein belongs to the cytochrome P450 family. Heme is required as a cofactor.

The protein localises to the membrane. It functions in the pathway secondary metabolite biosynthesis. Functionally, cytochrome P450 monooxygenase; part of the ATM2 gene cluster that mediates the biosynthesis of aflatrem, a tremorgenic mycotoxin with acute neurotoxic effects. Synthesis of geranylgeranyl diphosphate (GGPP) by AtmG (a GGPP synthase) precedes condensation of GGPP with indole 3-glycerol phosphate, followed by epoxidation and cyclization by AtmM (a FAD-dependent monooxygenase) and AtmC (a prenyltransferase) to produce paspaline. AtmB is also essential for paspaline production, but its exact role has not been identified yet. AtmP, a cytochrome P450 monooxygenase, subsequently converts paspaline to 13-desoxypaxilline via PC-M6 by removal of the C-30 methyl group and oxidation at C-10. AtmQ, a cytochrome P450 monooxygenase, then catalyzes the oxidation of 13-desoxypaxilline, first at C-7 to produce paspalicine and then at C-13 to form paspalinine. Finally, AtmD prenylates paspalinine to form aflatrem. The polypeptide is Cytochrome P450 monooxygenase AtmP (Aspergillus flavus).